A 275-amino-acid polypeptide reads, in one-letter code: Tryptophan synthase alpha chain (275 aa).

Residues Glu49 and Asp60 each act as proton acceptor in the active site.

The protein belongs to the TrpA family. In terms of assembly, tetramer of two alpha and two beta chains.

The enzyme catalyses (1S,2R)-1-C-(indol-3-yl)glycerol 3-phosphate + L-serine = D-glyceraldehyde 3-phosphate + L-tryptophan + H2O. It functions in the pathway amino-acid biosynthesis; L-tryptophan biosynthesis; L-tryptophan from chorismate: step 5/5. Functionally, the alpha subunit is responsible for the aldol cleavage of indoleglycerol phosphate to indole and glyceraldehyde 3-phosphate. This is Tryptophan synthase alpha chain from Psychrobacter sp. (strain PRwf-1).